Reading from the N-terminus, the 828-residue chain is Putative dual specificity tyrosine-phosphorylation-regulated kinase 3 homolog (828 aa).

Residues M1 to L14 are compositionally biased toward basic and acidic residues. The disordered stretch occupies residues M1–N26. Over residues T17–N26 the composition is skewed to polar residues. The Protein kinase domain occupies Y276–L589. Residues I282–V290 and K305 each bind ATP. D402 serves as the catalytic Proton acceptor. S616 carries the post-translational modification Phosphoserine.

The protein belongs to the protein kinase superfamily. CMGC Ser/Thr protein kinase family. MNB/DYRK subfamily. Post-translationally, autophosphorylated on tyrosine residues.

The enzyme catalyses L-seryl-[protein] + ATP = O-phospho-L-seryl-[protein] + ADP + H(+). The catalysed reaction is L-threonyl-[protein] + ATP = O-phospho-L-threonyl-[protein] + ADP + H(+). It carries out the reaction L-tyrosyl-[protein] + ATP = O-phospho-L-tyrosyl-[protein] + ADP + H(+). This chain is Putative dual specificity tyrosine-phosphorylation-regulated kinase 3 homolog (Dyrk3), found in Drosophila melanogaster (Fruit fly).